A 335-amino-acid chain; its full sequence is UPF0353 protein MAP_3435c (335 aa).

Transmembrane regions (helical) follow at residues 18–38 and 67–87; these read WFFL…VQQF and VPTI…AGPT. The VWFA domain occupies 98 to 294; the sequence is VVMLVIDVSE…DSLKNVYSTL (197 aa). A helical membrane pass occupies residues 309 to 329; it reads MAWMLLGAVVLAGAVLAGLLL.

Belongs to the UPF0353 family.

The protein resides in the cell membrane. This chain is UPF0353 protein MAP_3435c, found in Mycolicibacterium paratuberculosis (strain ATCC BAA-968 / K-10) (Mycobacterium paratuberculosis).